A 403-amino-acid polypeptide reads, in one-letter code: Phosphoglycerate kinase (403 aa).

Substrate contacts are provided by residues D21–N23, R36, H59–R62, R119, and R159. Residues K214, G301, E332, and G359–S362 each bind ATP.

Belongs to the phosphoglycerate kinase family. As to quaternary structure, monomer.

The protein localises to the cytoplasm. The enzyme catalyses (2R)-3-phosphoglycerate + ATP = (2R)-3-phospho-glyceroyl phosphate + ADP. Its pathway is carbohydrate degradation; glycolysis; pyruvate from D-glyceraldehyde 3-phosphate: step 2/5. This chain is Phosphoglycerate kinase, found in Lactobacillus gasseri (strain ATCC 33323 / DSM 20243 / BCRC 14619 / CIP 102991 / JCM 1131 / KCTC 3163 / NCIMB 11718 / NCTC 13722 / AM63).